Here is a 584-residue protein sequence, read N- to C-terminus: Protein BONZAI 3 (584 aa).

Positions 1-23 are disordered; that stretch reads MGGCLSGDVKGGKQAIGGVQQRP. Gly-2 carries the N-myristoyl glycine lipid modification. C2 domains follow at residues 34 to 167 and 178 to 305; these read HNDA…TLTL and NRNL…NFVY. Ca(2+) is bound by residues Asp-67, Asp-73, Asp-126, Asp-128, and Asp-145. The region spanning 344–563 is the VWFA domain; it reads NFMVAVDFTA…SVVQALLEEL (220 aa).

This sequence belongs to the copine family. Interacts with BAP1 and BAP2. It depends on Ca(2+) as a cofactor. Expressed at an extremely low level.

The protein localises to the cell membrane. Its function is as follows. Negative regulator of cell death and defense responses. Repress a number of R genes and may have effects in promoting growth and development. May function in membrane trafficking and in fusion of vesicles with plasma membrane. The sequence is that of Protein BONZAI 3 (BON3) from Arabidopsis thaliana (Mouse-ear cress).